The following is a 455-amino-acid chain: Mitochondrial distribution and morphology protein 10 (455 aa).

Disordered regions lie at residues 216–249 (WETT…EDAV), 278–311 (IRFS…PSPA), and 377–399 (PRSS…PLGE). Residues 217 to 227 (ETTNGENGTNT) show a composition bias toward low complexity. Positions 228-237 (SAPGNASNSR) are enriched in polar residues. Pro residues predominate over residues 291-301 (AQIPPPSPFTP).

This sequence belongs to the MDM10 family. Component of the ER-mitochondria encounter structure (ERMES) or MDM complex, composed of MMM1, MDM10, MDM12 and MDM34. Associates with the mitochondrial outer membrane sorting assembly machinery SAM(core) complex.

It localises to the mitochondrion outer membrane. In terms of biological role, component of the ERMES/MDM complex, which serves as a molecular tether to connect the endoplasmic reticulum and mitochondria. Components of this complex are involved in the control of mitochondrial shape and protein biogenesis and may function in phospholipid exchange. MDM10 is involved in the late assembly steps of the general translocase of the mitochondrial outer membrane (TOM complex). Functions in the TOM40-specific route of the assembly of outer membrane beta-barrel proteins, including the association of TOM40 with the receptor TOM22 and small TOM proteins. Can associate with the SAM(core) complex as well as the MDM12-MMM1 complex, both involved in late steps of the major beta-barrel assembly pathway, that is responsible for biogenesis of all outer membrane beta-barrel proteins. May act as a switch that shuttles between both complexes and channels precursor proteins into the TOM40-specific pathway. Plays a role in mitochondrial morphology and in the inheritance of mitochondria. This chain is Mitochondrial distribution and morphology protein 10, found in Coprinopsis cinerea (strain Okayama-7 / 130 / ATCC MYA-4618 / FGSC 9003) (Inky cap fungus).